The chain runs to 401 residues: Stearoyl-[acyl-carrier-protein] 9-desaturase 3, chloroplastic (401 aa).

The disordered stretch occupies residues Met-1–Arg-31. The transit peptide at Met-1–Ser-35 directs the protein to the chloroplast. Fe cation-binding residues include Glu-140, Glu-178, His-181, Glu-231, Glu-264, and His-267.

It belongs to the fatty acid desaturase type 2 family. As to quaternary structure, homodimer. The cofactor is Fe(2+). In terms of tissue distribution, ubiquitously expressed with a preference in leaves, flowers and stems.

It is found in the plastid. The protein resides in the chloroplast. It carries out the reaction octadecanoyl-[ACP] + 2 reduced [2Fe-2S]-[ferredoxin] + O2 + 2 H(+) = (9Z)-octadecenoyl-[ACP] + 2 oxidized [2Fe-2S]-[ferredoxin] + 2 H2O. Its pathway is lipid metabolism; fatty acid metabolism. Its function is as follows. Converts stearoyl-ACP to oleoyl-ACP by introduction of a cis double bond between carbons 9 and 10 of the acyl chain. Also able to convert palmitoyl-ACP to palmitoleoyl-ACP at the C9 position. Exhibits delta-9 palmitoyl-[acyl-carrier-protein] desaturase (PAD) activity. Involved in omega-7 monounsaturated fatty acid biosynthesis, especially in the endosperm oil. The protein is Stearoyl-[acyl-carrier-protein] 9-desaturase 3, chloroplastic (S-ACP-DES3) of Arabidopsis thaliana (Mouse-ear cress).